The following is a 927-amino-acid chain: Calmodulin-binding transcription activator CBT (927 aa).

Positions 26–152 form a DNA-binding region, CG-1; sequence YEKLVAEAAA…YRQTAEENAM (127 aa). The interval 70-96 is necessary and sufficient for nuclear localization; that stretch reads LYDRKVVRNFRKDGHNWKKKKDGRTVQ. The Nuclear localization signal motif lies at 72–79; the sequence is DRKVVRNF. The ANK repeat unit spans residues 609 to 638; that stretch reads SGWTALHWAAYHGRERMVATLLSAGANPSL. 2 consecutive IQ domains span residues 757-786 and 799-828; these read EIVAAMKIQHAFRNYNRKKAMRAAARIQSH and MRRQVIRIQAAYRGHQVRRQYRKVIWSVGI. Residues 826–845 form a calmodulin-binding region; sequence VGIVEKAILRWRKKRKGLRG. Residues 830-851 form a necessary and sufficient for nuclear localization region; the sequence is EKAILRWRKKRKGLRGIASGMP. Residues 882 to 911 enclose the IQ 3 domain; the sequence is FNRSVVRVQALFRSYKAQQEYRRMKIAHEE.

It belongs to the CAMTA family.

The protein localises to the nucleus. Its activity is regulated as follows. Transcriptional activation activity is strongly reduced by calmodulin. Its function is as follows. Transcription activator that binds calmodulin in a calcium-dependent manner in vitro. Binds to the DNA consensus sequence 5'-T[AC]CG[CT]GT[GT][GT][GT][GT]T[GT]CG-3'. This chain is Calmodulin-binding transcription activator CBT, found in Oryza sativa subsp. japonica (Rice).